A 955-amino-acid chain; its full sequence is 2-oxoglutarate dehydrogenase E1 component (955 aa).

It belongs to the alpha-ketoglutarate dehydrogenase family. Homodimer. Part of the 2-oxoglutarate dehydrogenase (OGDH) complex composed of E1 (2-oxoglutarate dehydrogenase), E2 (dihydrolipoamide succinyltransferase) and E3 (dihydrolipoamide dehydrogenase); the complex contains multiple copies of the three enzymatic components (E1, E2 and E3). Requires thiamine diphosphate as cofactor.

The enzyme catalyses N(6)-[(R)-lipoyl]-L-lysyl-[protein] + 2-oxoglutarate + H(+) = N(6)-[(R)-S(8)-succinyldihydrolipoyl]-L-lysyl-[protein] + CO2. Its function is as follows. E1 component of the 2-oxoglutarate dehydrogenase (OGDH) complex which catalyzes the decarboxylation of 2-oxoglutarate, the first step in the conversion of 2-oxoglutarate to succinyl-CoA and CO(2). This is 2-oxoglutarate dehydrogenase E1 component from Bacillus cereus (strain ATCC 14579 / DSM 31 / CCUG 7414 / JCM 2152 / NBRC 15305 / NCIMB 9373 / NCTC 2599 / NRRL B-3711).